We begin with the raw amino-acid sequence, 196 residues long: Holliday junction branch migration complex subunit RuvA (196 aa).

Positions 1-63 (MIASVRGEVI…EDSMTLYGFA (63 aa)) are domain I. The domain II stretch occupies residues 64–142 (DADARDLFGT…PVTTGAGVTA (79 aa)). The segment at 143-151 (VGGHAVRGP) is flexible linker. A domain III region spans residues 151 to 196 (PVVEALVGLGFAAKQAEEACDKVLAADPDATTSSALRAALSMLGKK).

Belongs to the RuvA family. In terms of assembly, homotetramer. Forms an RuvA(8)-RuvB(12)-Holliday junction (HJ) complex. HJ DNA is sandwiched between 2 RuvA tetramers; dsDNA enters through RuvA and exits via RuvB. An RuvB hexamer assembles on each DNA strand where it exits the tetramer. Each RuvB hexamer is contacted by two RuvA subunits (via domain III) on 2 adjacent RuvB subunits; this complex drives branch migration. In the full resolvosome a probable DNA-RuvA(4)-RuvB(12)-RuvC(2) complex forms which resolves the HJ.

It is found in the cytoplasm. The RuvA-RuvB-RuvC complex processes Holliday junction (HJ) DNA during genetic recombination and DNA repair, while the RuvA-RuvB complex plays an important role in the rescue of blocked DNA replication forks via replication fork reversal (RFR). RuvA specifically binds to HJ cruciform DNA, conferring on it an open structure. The RuvB hexamer acts as an ATP-dependent pump, pulling dsDNA into and through the RuvAB complex. HJ branch migration allows RuvC to scan DNA until it finds its consensus sequence, where it cleaves and resolves the cruciform DNA. The sequence is that of Holliday junction branch migration complex subunit RuvA from Mycobacterium sp. (strain JLS).